A 420-amino-acid polypeptide reads, in one-letter code: Methionine aminopeptidase 2 (420 aa).

Positions 1 to 48 (MSDAIAKDAVNTSSEKEPVSATPELKTSGSPDAAVSSGDKKKKKKKKK) are disordered. H172 is a substrate binding site. Residues D192, D203, and H272 each contribute to the a divalent metal cation site. H280 contributes to the substrate binding site. The a divalent metal cation site is built by E305 and E401.

This sequence belongs to the peptidase M24A family. Methionine aminopeptidase eukaryotic type 2 subfamily. The cofactor is Co(2+). It depends on Zn(2+) as a cofactor. Requires Mn(2+) as cofactor. Fe(2+) serves as cofactor.

It is found in the cytoplasm. It carries out the reaction Release of N-terminal amino acids, preferentially methionine, from peptides and arylamides.. Its function is as follows. Cotranslationally removes the N-terminal methionine from nascent proteins. The N-terminal methionine is often cleaved when the second residue in the primary sequence is small and uncharged (Met-Ala-, Cys, Gly, Pro, Ser, Thr, or Val). The polypeptide is Methionine aminopeptidase 2 (Lachancea thermotolerans (strain ATCC 56472 / CBS 6340 / NRRL Y-8284) (Yeast)).